The primary structure comprises 453 residues: T-box transcription factor T homolog (453 aa).

The segment at residues leucine 47–aspartate 217 is a DNA-binding region (T-box). The disordered stretch occupies residues arginine 283–alanine 304.

The protein resides in the nucleus. In terms of biological role, may be involved in the transcriptional regulation of genes required for gastrulation. The polypeptide is T-box transcription factor T homolog (Patiria pectinifera (Starfish)).